Reading from the N-terminus, the 613-residue chain is Phostensin (613 aa).

Basic and acidic residues predominate over residues 18 to 33; sequence EEASVRGREKAERERL. 2 disordered regions span residues 18–231 and 266–500; these read EEAS…SAYQ and GEER…AVPG. Residues serine 54, serine 125, serine 133, serine 175, and serine 195 each carry the phosphoserine modification. Basic and acidic residues-rich tracts occupy residues 104-154 and 167-191; these read RSEE…ERRL and LEAR…EAWK. The residue at position 199 (threonine 199) is a Phosphothreonine. The span at 199 to 221 shows a compositional bias: basic and acidic residues; the sequence is TPERSLRLAESREQSPRRKEVES. Residue serine 224 is modified to Phosphoserine. The span at 266–282 shows a compositional bias: basic and acidic residues; sequence GEERQDYSEECGRKEEW. The span at 295–309 shows a compositional bias: polar residues; that stretch reads LSETLTREAQGNSSA. Basic and acidic residues-rich tracts occupy residues 314–327, 340–350, and 357–366; these read AEQR…RGMK, KAREWTPRDIE, and EPPESAEKLL. A phosphoserine mark is found at serine 368 and serine 432. Positions 424-446 are enriched in pro residues; that stretch reads QPPPPAPLSPPPPAPTAPQPPGD. Lysine 457 carries the N6-acetyllysine modification. The segment covering 476-499 has biased composition (low complexity); it reads PRRSVPPATPATPTSPATVDAAVP. Residues serine 490 and serine 530 each carry the phosphoserine modification. Residues 552–595 are disordered; it reads QYPSESSVLEELGPEPEVPSAPNPPAAQPDDEEDEEELLLLQPE. Positions 567–578 are enriched in pro residues; the sequence is PEVPSAPNPPAA. A compositionally biased stretch (acidic residues) spans 580–589; it reads PDDEEDEEEL.

As to quaternary structure, interacts with Protein phosphatase 1 (PP1). Isoform 4 is predominantly expressed in leukocytes and spleen.

Its subcellular location is the cytoplasm. The protein localises to the cytoskeleton. Its function is as follows. May target protein phosphatase 1 to F-actin cytoskeleton. The polypeptide is Phostensin (PPP1R18) (Homo sapiens (Human)).